The primary structure comprises 33 residues: Photosystem II reaction center protein Psb30 (33 aa).

Residues 5-25 (VIAQLASLALIIVLGPLVIGL) traverse the membrane as a helical segment.

Belongs to the Psb30/Ycf12 family. PSII is composed of 1 copy each of membrane proteins PsbA, PsbB, PsbC, PsbD, PsbE, PsbF, PsbH, PsbI, PsbJ, PsbK, PsbL, PsbM, PsbT, PsbX, PsbY, PsbZ, Psb30/Ycf12, peripheral proteins of the oxygen-evolving complex and a large number of cofactors. It forms dimeric complexes.

The protein localises to the plastid. The protein resides in the chloroplast thylakoid membrane. A core subunit of photosystem II (PSII), probably helps stabilize the reaction center. In Chara vulgaris (Common stonewort), this protein is Photosystem II reaction center protein Psb30.